Here is a 706-residue protein sequence, read N- to C-terminus: ATP-dependent DNA helicase HMI1, mitochondrial (706 aa).

The region spanning 5–277 is the UvrD-like helicase ATP-binding domain; that stretch reads TPSQWKVINK…LKLFDNFRST (273 aa). Residues 29–34 and Arg275 each bind ATP; that span reads GSGKTL. Residues 278-593 form the UvrD-like helicase C-terminal domain; the sequence is PEIISLASKI…KLSTIHSAKG (316 aa). Residues 693–706 constitute a propeptide, cleaved upon import into mitochondrion; sequence YSSLRGCKSVFRRI.

The protein belongs to the helicase family. UvrD subfamily. The cofactor is Mg(2+).

It is found in the mitochondrion inner membrane. The enzyme catalyses Couples ATP hydrolysis with the unwinding of duplex DNA by translocating in the 3'-5' direction.. It catalyses the reaction ATP + H2O = ADP + phosphate + H(+). Its function is as follows. Required for mitochondrial genome maintenance and mitochondrial DNA inheritance. This Saccharomyces cerevisiae (strain ATCC 204508 / S288c) (Baker's yeast) protein is ATP-dependent DNA helicase HMI1, mitochondrial (HMI1).